The chain runs to 446 residues: MQTSLKIAVVGSGLVGSLLAIYLKKAGHTVHVYDRSPDIRKINFSGRSINLAMSNRGWKALDGVGVGDAVREIAIPMDKRAIHLVDKLNFQNYGQEGESIYSISRGTLNRKMIDLAENAGAEFYFEQKIWDVTLSDATLHIGESERGEWEERKYDMVFGADGAFSRIRHRMQRQSMFNYSQEFLNMGYKELNIPANADRTHKLDKNSFHIWPRGEYMLIALPNLDGSFTCTLFMPFEGENSFESLTDRKMVEDFFEKNFPDSIEVIPELANDFFKNPTSTLVTMKCFPWTYEDKIALIGDACHAIVPFYGQGMNAGFEDITVLNEMIEKFGDDWKKIFTEYQISRKPNADAIAELSYRNFMEMSTKTADEKFLLQKKIEKVFSDKHPDKWIPLYSRVTFSDRPYAEALAIGDFQNGIMEEVLKLDNIENIWNTPEVENKILELLQK.

The protein belongs to the aromatic-ring hydroxylase family. KMO subfamily. It depends on FAD as a cofactor.

It carries out the reaction L-kynurenine + NADPH + O2 + H(+) = 3-hydroxy-L-kynurenine + NADP(+) + H2O. It participates in cofactor biosynthesis; NAD(+) biosynthesis; quinolinate from L-kynurenine: step 1/3. In terms of biological role, catalyzes the hydroxylation of L-kynurenine (L-Kyn) to form 3-hydroxy-L-kynurenine (L-3OHKyn). Required for synthesis of quinolinic acid. The protein is Kynurenine 3-monooxygenase of Flavobacterium johnsoniae (strain ATCC 17061 / DSM 2064 / JCM 8514 / BCRC 14874 / CCUG 350202 / NBRC 14942 / NCIMB 11054 / UW101) (Cytophaga johnsonae).